The chain runs to 440 residues: MGALLALLDPVQPTRAPDCGGILTPLGLSYLAEVSKPHAEVVLRQDLMPKEPQTCSLAPWSPAGTELPAVKVADLWLSVIPEAGLRLGIEVELRIAPLHTVPMPVRISIRADLHVDMGPDGNLQLLTSACRPTVQAQSTREAESKSSRSILDKVVDVDKLCLDVSKLLLFPNEQLMSLTALFPVTPNCQLQYLALAAPVFSKQGIALSLQTTFQVAGAVVPVPVSPVPFSMPELASTSTSHLILALSEHFYTSLYFTLERAGAFNMTIPSMLTTATLAQKITQVGSLYHEDLPITLSAALRSSPRVVLEEGRAALKLFLTVHIGAGSPDFQSFLSVSADVTRAGLQLSVSDTRMMISTAVIEDAELSLAASNVGLVRAALLEELFLAPVCQQVPAWMDDVLREGVHLPHMSHFTYTDVNVVVHKDYVLVPCKLKLRSTMA.

In terms of tissue distribution, expressed in developing retina and brain, but not in heart, liver or kidney. In brain, located in a narrow strip in the boundary between the ventricular zone (consisting of proliferating cells) and the intermediate zone (consisting of postmitotic, differentiating cells). Expressed in all major regions of the developing brain, including the myelencephalon, the mesencephalon, the telencephalon and the diencephalon. In the developing retina, expression is scattered across the retinal neural epithelium. Expressed in egg white (at protein level). Expressed in the magnum of the oviduct (at protein level).

Functionally, may play a role in the developmental transition from cell proliferation to cell differentiation during neurogenesis. This is Protein TENP (TENP) from Gallus gallus (Chicken).